The following is a 339-amino-acid chain: Uracil nucleotide/cysteinyl leukotriene receptor (339 aa).

At 1-36 (MNGLEAALPSLTDNSSLAYSEQCGQETPLENMLFAC) the chain is on the extracellular side. Asn14 carries N-linked (GlcNAc...) asparagine glycosylation. Residues 37–57 (FYLLDFILAFVGNALALWLFI) traverse the membrane as a helical segment. Over 58–64 (WDHKSGT) the chain is Cytoplasmic. The chain crosses the membrane as a helical span at residues 65–85 (PANVFLMHLAVADLSCVLVLP). The Extracellular segment spans residues 86–105 (TRLVYHFSGNHWPFGEIPCR). Cys104 and Cys181 are joined by a disulfide. A helical transmembrane segment spans residues 106 to 126 (LTGFLFYLNMYASIYFLTCIS). The Cytoplasmic portion of the chain corresponds to 127–147 (ADRFLAIVHPVKSLKLRRPLY). A helical transmembrane segment spans residues 148–168 (AHLACAFLWIVVAVAMAPLLV). Topologically, residues 169–195 (SPQTVQTNHTVVCLQLYREKASHHALA) are extracellular. An N-linked (GlcNAc...) asparagine glycan is attached at Asn176. The helical transmembrane segment at 196 to 216 (SLAVAFTFPFITTVTCYLLII) threads the bilayer. Topologically, residues 217-232 (RSLRQGPRIEKHLKNK) are cytoplasmic. Residues 233 to 253 (AVRMIAMVLAIFLICFVPYHI) traverse the membrane as a helical segment. Residues 254-280 (HRSVYVLHYRGGGTSCAAQRALALGNR) lie on the Extracellular side of the membrane. The helical transmembrane segment at 281–301 (ITSCLTSLNGALDPVMYFFVA) threads the bilayer. Topologically, residues 302 to 339 (EKFRHALCNLLCSKRLTGPPPSFEGKTNESSLSARSEL) are cytoplasmic.

This sequence belongs to the G-protein coupled receptor 1 family.

The protein resides in the cell membrane. Dual specificity receptor for uracil nucleotides and cysteinyl leukotrienes (CysLTs). Signals through G(i) and inhibition of adenylyl cyclase. May mediate brain damage by nucleotides and CysLTs following ischemia. The polypeptide is Uracil nucleotide/cysteinyl leukotriene receptor (Mus musculus (Mouse)).